The sequence spans 393 residues: Staphopain B (393 aa).

An N-terminal signal peptide occupies residues 1-36; sequence MNSSYKSRVFNIISIIMVSMLILSLGAFANNNKAKA. Residues 37–219 constitute a propeptide that is removed on maturation; that stretch reads DSHSKQLEIN…KVEENEAIQE (183 aa). Residues Cys-243, His-340, and Asn-360 contribute to the active site.

It belongs to the peptidase C47 family. As to quaternary structure, in the cytoplasm, prematurely activated/folded SspB forms a stable non-covalent complex with SspC. Proteolytically cleaved by staphylococcal serine protease (SspA).

The protein resides in the secreted. Prematurely activated/folded staphopain B is inhibited by staphostatin B (SspC), which is probably required to protect staphylococcal cytoplasmic proteins from degradation by SspB. Functionally, cysteine protease that plays an important role in the inhibition of host innate immune response. Degrades host elastin, fibrogen, fibronectin and kininogen. Blocks phagocytosis of opsonised S.aureus by neutrophils and monocytes by inducing their death in a proteolytic activity-dependent manner. Decreases surface expression of the 'don't eat me' signal CD31 on neutrophils. Cleaves host galectin-3/LGALS3, thereby inhibiting the neutrophil-activating ability of the lectin. This Staphylococcus aureus (strain MSSA476) protein is Staphopain B (sspB).